We begin with the raw amino-acid sequence, 103 residues long: Seminal ribonuclease (103 aa).

4 disulfides stabilise this stretch: C12–C70, C26–C81, C44–C96, and C51–C58. Residues 27–31 (KLVNT), K52, and R71 contribute to the substrate site.

This sequence belongs to the pancreatic ribonuclease family. In terms of assembly, homodimer; disulfide-linked.

The protein localises to the secreted. It carries out the reaction an [RNA] containing cytidine + H2O = an [RNA]-3'-cytidine-3'-phosphate + a 5'-hydroxy-ribonucleotide-3'-[RNA].. It catalyses the reaction an [RNA] containing uridine + H2O = an [RNA]-3'-uridine-3'-phosphate + a 5'-hydroxy-ribonucleotide-3'-[RNA].. Its function is as follows. This enzyme hydrolyzes both single- and double-stranded RNA. This is Seminal ribonuclease (SRN) from Cephalophus silvicultor (Yellow-backed duiker).